The chain runs to 326 residues: Probable UDP-3-O-acyl-N-acetylglucosamine deacetylase 2, mitochondrial (326 aa).

A mitochondrion-targeting transit peptide spans 1–21; it reads MRLPVTVKATKPSFLVIWIRY. Zn(2+) is bound by residues His109, His281, and Asp285.

Belongs to the LpxC family. Requires Zn(2+) as cofactor.

The protein localises to the mitochondrion. It carries out the reaction a UDP-3-O-[(3R)-3-hydroxyacyl]-N-acetyl-alpha-D-glucosamine + H2O = a UDP-3-O-[(3R)-3-hydroxyacyl]-alpha-D-glucosamine + acetate. Its pathway is glycolipid biosynthesis; lipid IV(A) biosynthesis; lipid IV(A) from (3R)-3-hydroxytetradecanoyl-[acyl-carrier-protein] and UDP-N-acetyl-alpha-D-glucosamine: step 2/6. Involved in the biosynthesis of lipid A, a phosphorylated glycolipid that in bacteria anchors the lipopolysaccharide to the outer membrane of the cell. Lipid A-like molecules in plants may serve as structural components of the outer membranes of mitochondria and/or chloroplasts, or may be involved in signal transduction or plant defense responses (Potential). The sequence is that of Probable UDP-3-O-acyl-N-acetylglucosamine deacetylase 2, mitochondrial (LPXC2) from Arabidopsis thaliana (Mouse-ear cress).